Reading from the N-terminus, the 331-residue chain is NADH-quinone oxidoreductase subunit H 2 (331 aa).

8 helical membrane-spanning segments follow: residues 6-26 (AGFLVLIAKLTIVLAVLLLVA), 79-99 (IFMLAPAVVAATALLVFAVIP), 120-140 (VGLLYFFALSSLGVYGVALGG), 155-175 (GAAQMISYELSLGLAIVPVVM), 193-213 (PFILTQPVAFAIFVISAMAEI), 242-262 (LFFLGEYVNMQVLGGLVAVLF), 271-291 (LPPVVWLFIKIVLVALIMIWV), and 310-330 (VLIPLALVNIMVTGAWVLWMG).

Belongs to the complex I subunit 1 family. In terms of assembly, NDH-1 is composed of 14 different subunits. Subunits NuoA, H, J, K, L, M, N constitute the membrane sector of the complex.

It is found in the cell inner membrane. The enzyme catalyses a quinone + NADH + 5 H(+)(in) = a quinol + NAD(+) + 4 H(+)(out). In terms of biological role, NDH-1 shuttles electrons from NADH, via FMN and iron-sulfur (Fe-S) centers, to quinones in the respiratory chain. The immediate electron acceptor for the enzyme in this species is believed to be ubiquinone. Couples the redox reaction to proton translocation (for every two electrons transferred, four hydrogen ions are translocated across the cytoplasmic membrane), and thus conserves the redox energy in a proton gradient. This subunit may bind ubiquinone. The chain is NADH-quinone oxidoreductase subunit H 2 from Syntrophobacter fumaroxidans (strain DSM 10017 / MPOB).